Reading from the N-terminus, the 71-residue chain is Augerpeptide-s7a (71 aa).

Residues 1-20 form the signal peptide; sequence MSALKFVLICGLVLLLIETI. Positions 21-29 are excised as a propeptide; it reads PGVSLNLMR. Disulfide bonds link Cys-36–Cys-48, Cys-42–Cys-65, and Cys-47–Cys-68.

In terms of tissue distribution, expressed by the venom duct.

The protein resides in the secreted. Its function is as follows. Elicits an uncoordinated twisting syndrome when injected into C.elegans, but has no effect on mice. The polypeptide is Augerpeptide-s7a (Terebra subulata (Chocolate spotted auger)).